The sequence spans 350 residues: 4-hydroxy-2-oxovalerate aldolase 3 (350 aa).

Residues 13–265 (VVFHDMCLRD…DTGVDLFRLM (253 aa)) form the Pyruvate carboxyltransferase domain. Position 21–22 (21–22 (RD)) interacts with substrate. Asp-22 is a binding site for Mn(2+). The active-site Proton acceptor is the His-25. Substrate contacts are provided by Ser-175 and His-204. Residues His-204 and His-206 each coordinate Mn(2+). Residue Tyr-295 coordinates substrate.

This sequence belongs to the 4-hydroxy-2-oxovalerate aldolase family.

It carries out the reaction (S)-4-hydroxy-2-oxopentanoate = acetaldehyde + pyruvate. This Azotobacter vinelandii (strain DJ / ATCC BAA-1303) protein is 4-hydroxy-2-oxovalerate aldolase 3 (lapG).